Consider the following 341-residue polypeptide: Malate dehydrogenase 1, mitochondrial (341 aa).

Residues 1–22 constitute a mitochondrion transit peptide; sequence MFRSMLVRSSASAKQAVIRRSF. NAD(+)-binding positions include 36-42 and Asp-62; that span reads GAAGGIG. Positions 109 and 115 each coordinate substrate. Residues Asn-122 and 145–147 contribute to the NAD(+) site; that span reads ISN. Positions 147 and 181 each coordinate substrate. His-205 functions as the Proton acceptor in the catalytic mechanism. Residue Met-256 coordinates NAD(+).

The protein belongs to the LDH/MDH superfamily. MDH type 1 family. As to quaternary structure, homodimer. In terms of processing, forms intramolecular disulfide bonds. Expressed in rosette leaves.

Its subcellular location is the mitochondrion matrix. It catalyses the reaction (S)-malate + NAD(+) = oxaloacetate + NADH + H(+). Negatively regulated by ATP. Not redox-regulated. The formation of intramolecular disulfide bonds does not alter enzymatic activity. Catalyzes a reversible NAD-dependent dehydrogenase reaction involved in central metabolism and redox homeostasis between organelle compartments. Required for carbon dioxide and energy partitioning in leaves. May limit photorespiration during the dark phase. Its activity is essential to shuttle reductants out from the mitochondria to support the photorespiratory flux. Can convert 2-oxoglutarate to (S)-2-hydroxyglutarate in vitro. This chain is Malate dehydrogenase 1, mitochondrial, found in Arabidopsis thaliana (Mouse-ear cress).